The primary structure comprises 89 residues: uncharacterized protein (89 aa).

The HTH arsR-type domain maps to 1-89 (MEKYEKAAEI…KEIIKLVDEL (89 aa)).

This is an uncharacterized protein from Methanocaldococcus jannaschii (strain ATCC 43067 / DSM 2661 / JAL-1 / JCM 10045 / NBRC 100440) (Methanococcus jannaschii).